We begin with the raw amino-acid sequence, 311 residues long: Aspartate carbamoyltransferase catalytic subunit (311 aa).

The carbamoyl phosphate site is built by R55 and T56. K85 contributes to the L-aspartate binding site. Residues R106, H135, and Q138 each contribute to the carbamoyl phosphate site. R168 and R230 together coordinate L-aspartate. Residues L268 and P269 each contribute to the carbamoyl phosphate site.

Belongs to the aspartate/ornithine carbamoyltransferase superfamily. ATCase family. As to quaternary structure, heterododecamer (2C3:3R2) of six catalytic PyrB chains organized as two trimers (C3), and six regulatory PyrI chains organized as three dimers (R2).

It carries out the reaction carbamoyl phosphate + L-aspartate = N-carbamoyl-L-aspartate + phosphate + H(+). Its pathway is pyrimidine metabolism; UMP biosynthesis via de novo pathway; (S)-dihydroorotate from bicarbonate: step 2/3. Catalyzes the condensation of carbamoyl phosphate and aspartate to form carbamoyl aspartate and inorganic phosphate, the committed step in the de novo pyrimidine nucleotide biosynthesis pathway. The chain is Aspartate carbamoyltransferase catalytic subunit from Pectobacterium atrosepticum (strain SCRI 1043 / ATCC BAA-672) (Erwinia carotovora subsp. atroseptica).